Here is a 297-residue protein sequence, read N- to C-terminus: 4-diphosphocytidyl-2-C-methyl-D-erythritol kinase (297 aa).

Lys10 is a catalytic residue. An ATP-binding site is contributed by 95-105; sequence PVAGGMAGGSA. The active site involves Asp137.

It belongs to the GHMP kinase family. IspE subfamily.

It catalyses the reaction 4-CDP-2-C-methyl-D-erythritol + ATP = 4-CDP-2-C-methyl-D-erythritol 2-phosphate + ADP + H(+). It functions in the pathway isoprenoid biosynthesis; isopentenyl diphosphate biosynthesis via DXP pathway; isopentenyl diphosphate from 1-deoxy-D-xylulose 5-phosphate: step 3/6. Catalyzes the phosphorylation of the position 2 hydroxy group of 4-diphosphocytidyl-2C-methyl-D-erythritol. The chain is 4-diphosphocytidyl-2-C-methyl-D-erythritol kinase from Streptomyces avermitilis (strain ATCC 31267 / DSM 46492 / JCM 5070 / NBRC 14893 / NCIMB 12804 / NRRL 8165 / MA-4680).